Reading from the N-terminus, the 116-residue chain is MRHQLRIPLLSKPADQRKALLRGLTTQLIREGRVTTTKARAKALRNEAERMISLAKDGSLASRRRAIGYIYDKKLVHSLFEKAQERYGDRKGGYTRIVRTVSRKGDNAQMAIIELV.

Belongs to the bacterial ribosomal protein bL17 family. As to quaternary structure, part of the 50S ribosomal subunit. Contacts protein L32.

In Prochlorococcus marinus (strain MIT 9312), this protein is Large ribosomal subunit protein bL17.